The primary structure comprises 122 residues: Phospholipase A2 nigroviriditoxin basic subunit B (122 aa).

7 disulfides stabilise this stretch: cysteine 26–cysteine 115, cysteine 28–cysteine 44, cysteine 43–cysteine 95, cysteine 49–cysteine 122, cysteine 50–cysteine 88, cysteine 57–cysteine 81, and cysteine 75–cysteine 86. 3 residues coordinate Ca(2+): tyrosine 27, glycine 29, and glycine 31. Residue histidine 47 is part of the active site. A Ca(2+)-binding site is contributed by aspartate 48. Aspartate 89 is an active-site residue.

This sequence belongs to the phospholipase A2 family. Group II subfamily. D49 sub-subfamily. Nigroviriditoxin is a heterodimer of an acidic subunit A and a basic subunit B. It depends on Ca(2+) as a cofactor. Expressed by the venom gland.

It is found in the secreted. It carries out the reaction a 1,2-diacyl-sn-glycero-3-phosphocholine + H2O = a 1-acyl-sn-glycero-3-phosphocholine + a fatty acid + H(+). Heterodimer A-B: Nigroviriditoxin possesses phospholipase A2 (PLA2) activity. It consists of a non-covalent association of a basic PLA2 subunit B with a non-enzymatic subunit A. In terms of biological role, subunit B: Snake venom phospholipase A2 (PLA2) that induces myonecrosis in mice. PLA2 catalyzes the calcium-dependent hydrolysis of the 2-acyl groups in 3-sn-phosphoglycerides. In Bothriechis nigroviridis (Black-speckled palm pit viper), this protein is Phospholipase A2 nigroviriditoxin basic subunit B.